The chain runs to 1879 residues: Protein TIC 214 (1879 aa).

The next 6 membrane-spanning stretches (helical) occupy residues 18-38 (IINS…FSIG), 67-87 (FITG…HLAL), 90-110 (PHTI…WNNH), 127-147 (LSIQ…HFIL), 175-195 (VGWL…LVWI), and 218-238 (IFSI…PSPI). The interval 243–291 (LKETEERGESEEERDVEKTSETKGTKQEQEGSTEEDPSPSLFSEEKEDP) is disordered. Basic and acidic residues predominate over residues 257-271 (DVEKTSETKGTKQEQ).

Belongs to the TIC214 family. In terms of assembly, part of the Tic complex.

The protein resides in the plastid. The protein localises to the chloroplast inner membrane. Functionally, involved in protein precursor import into chloroplasts. May be part of an intermediate translocation complex acting as a protein-conducting channel at the inner envelope. The chain is Protein TIC 214 from Morus indica (Mulberry).